The chain runs to 105 residues: Met repressor (105 aa).

Belongs to the MetJ family. In terms of assembly, homodimer.

It localises to the cytoplasm. Functionally, this regulatory protein, when combined with SAM (S-adenosylmethionine) represses the expression of the methionine regulon and of enzymes involved in SAM synthesis. The chain is Met repressor from Yersinia pestis bv. Antiqua (strain Antiqua).